A 29-amino-acid polypeptide reads, in one-letter code: Cytochrome b6-f complex subunit 8 (29 aa).

The helical transmembrane segment at 3–23 (IVSIAWAALMVVFSFSLSLVV) threads the bilayer.

Belongs to the PetN family. As to quaternary structure, the 4 large subunits of the cytochrome b6-f complex are cytochrome b6, subunit IV (17 kDa polypeptide, PetD), cytochrome f and the Rieske protein, while the 4 small subunits are PetG, PetL, PetM and PetN. The complex functions as a dimer.

The protein resides in the plastid. The protein localises to the chloroplast thylakoid membrane. In terms of biological role, component of the cytochrome b6-f complex, which mediates electron transfer between photosystem II (PSII) and photosystem I (PSI), cyclic electron flow around PSI, and state transitions. The protein is Cytochrome b6-f complex subunit 8 of Phaseolus vulgaris (Kidney bean).